The sequence spans 720 residues: MIPTEDASARKREIEEKLKQEQETLSFIRESLEKSDQLTKGMVSILSSFESRLMQLENSIIPVHKQTENLQRLQENVDKTLSNMDHVISYYHVAKDTDKIIREGPAGRLYEYLACIAKIQKAVEYFQDNNPDSPELNTVKARFEKGKELLEAEFRSLLTRYSKPVPPVLILDAIGGDEDMEVQEEVTLEHLPEAVLQDIICISAWLVEYGRNQDFMNVYFQVRSSQLDRSIKGLKEHFRKNSATSAIHSPAVQTKRKETPTKKAPKRPVYIPGTIRKAQNLLKQYSQHGLDGKKGSNLTPLEGFEHDLRGVKHLSDEKHGATAGKDDVLDIEIDSYIHCISAFVKLAQSEYALLTEIIPEHHQKKTFDSLIQEALDNLMLEGDNIVSAARRAIMRHDYSAVLTIFPILRHLKQTKPDFDATLQGTAASTKNKLPALITSMETIGAKALEEFADSIKNDPDKEYNMPKDGTVHELTSNAILFLQQLLDFQETAGAMLASQVLGDTYNIPLDPRESSSSASSYSSEFSRKLLSTYIYKVLGNLQLNLSNKAKVYEDPALRAIFLHNNYNYILKSLEKSELIQLVAVTVKKVESSYRELIEQEIQNYQRSWLRVTEHLAERNIPDFQPGAKLKDKERQIIKDKFKGFNDGLEELCKIQKGWAVPDKEQRDTIRHAQKRVVSLTYKAFLQRCANISFTKNPEKYHRYSPEQVEDMIDRLFDTSA.

Coiled-coil stretches lie at residues 5-34 and 63-83; these read EDAS…SLEK and VHKQ…TLSN. Serine 133 carries the post-translational modification Phosphoserine. Residues 249–268 are disordered; that stretch reads SPAVQTKRKETPTKKAPKRP.

Belongs to the EXO70 family.

It is found in the cytoplasm. It localises to the cytosol. The protein localises to the cell membrane. Its subcellular location is the midbody. The protein resides in the midbody ring. Its function is as follows. Component of the exocyst complex involved in the docking of exocytic vesicles with fusion sites on the plasma membrane. It is required for neuron survival and plays an essential role in telencephalon development. In Danio rerio (Zebrafish), this protein is Exocyst complex component 7 (exoc7).